We begin with the raw amino-acid sequence, 524 residues long: Cytochrome P450 monooxygenase drtD (524 aa).

A helical transmembrane segment spans residues 2–22 (SDTYLVAASGLAVCFFVLYLL). Cys-418 provides a ligand contact to heme.

Belongs to the cytochrome P450 family. It depends on heme as a cofactor.

Its subcellular location is the membrane. The protein operates within secondary metabolite biosynthesis; terpenoid biosynthesis. In terms of biological role, cytochrome P450 monooxygenase; part of the gene cluster that mediates the biosynthesis of various drimane-type sesquiterpene esters, compounds that exhibit diverse biological activities and are widely present in eukaryotes. The pathway begins with the synthesis of the backbone drimenol by the terpene cyclase drtB using farnesyl pyrophosphate (FPP) as substrate. The cytochrome P450 monooxygenase drtD is then responsible for the hydroxylations at C-6, C-9 and C-12, as well as the oxidation of hydroxyl groups at C-6 and C-11 to a ketone and an aldehyde, respectively. Then, the biosynthesis can go in two directions, either the hydroxylated drimenol is further hydroxylated at C-2 and C-3 by an enzyme(s) not associated with the drt cluster, or the FAD-binding oxidoreductase drtC further oxidizes C-11 or C-12 to form the butyrolactone ring. DrtB, drtD and drtC are solely responsible for the formation of the different drimane structures observed during drimane sesquiterpenes biosynthesis. The polyketide synthase drtA synthesizes different lengths (C6 and C8) of PKS chains, which are then oxidized to varying degrees by the short-chain dehydrogenase drtF. Finally, these PKS chains are transferred onto drimane sesquiterpenes by the acyltransferase drtE, forming the sesquiterpene esters. In addition to the different fatty acyl-CoA chains produced by drtA, drtE is also able to use cinnamoyl-CoA as a substrate. The sequence is that of Cytochrome P450 monooxygenase drtD from Aspergillus calidoustus.